A 422-amino-acid chain; its full sequence is Histidinol dehydrogenase (422 aa).

3 residues coordinate NAD(+): tyrosine 123, glutamine 183, and asparagine 206. Serine 229, glutamine 251, and histidine 254 together coordinate substrate. Zn(2+) is bound by residues glutamine 251 and histidine 254. Residues glutamate 320 and histidine 321 each act as proton acceptor in the active site. Substrate contacts are provided by histidine 321, aspartate 354, glutamate 408, and histidine 413. Position 354 (aspartate 354) interacts with Zn(2+). Histidine 413 contacts Zn(2+).

It belongs to the histidinol dehydrogenase family. Zn(2+) serves as cofactor.

The enzyme catalyses L-histidinol + 2 NAD(+) + H2O = L-histidine + 2 NADH + 3 H(+). It participates in amino-acid biosynthesis; L-histidine biosynthesis; L-histidine from 5-phospho-alpha-D-ribose 1-diphosphate: step 9/9. Its function is as follows. Catalyzes the sequential NAD-dependent oxidations of L-histidinol to L-histidinaldehyde and then to L-histidine. The polypeptide is Histidinol dehydrogenase (Haloarcula marismortui (strain ATCC 43049 / DSM 3752 / JCM 8966 / VKM B-1809) (Halobacterium marismortui)).